We begin with the raw amino-acid sequence, 80 residues long: MSCCGGNCGCGAGCKCSGGCGGCKMYPELSYTENTAAETLILGVAPPKTTYLEGAGEEAAAENGGCKCGPDCKCNPCNCK.

The protein belongs to the metallothionein superfamily. Type 15 family.

In terms of biological role, metallothioneins have a high content of cysteine residues that bind various heavy metals. The chain is Metallothionein-like protein 1 (METAL1) from Coffea arabica (Arabian coffee).